Here is a 240-residue protein sequence, read N- to C-terminus: MRPVVRKNFLNIEELKRFLNGQTVVSIQPVTGSPLDKTDFIVAMAIAVEQAGAKALRIEGVNNVAAVSAAVTIPIIGIVKRDLPDSPIRITPFVSDVDGLANAGATVIAFDATDRTRPESRERIAQAIKNTGCFAMADCSTFEDGLWANSQGVEIVGSTLSGYVGDIEPTVPDFQLVKAFSEAGFFTMAEGRYNTPELAAKAIESGAVAVTVGSALTRLEVVTQWFNNATQAAGERKCAH.

Belongs to the NanE family.

The enzyme catalyses an N-acyl-D-glucosamine 6-phosphate = an N-acyl-D-mannosamine 6-phosphate. Its pathway is amino-sugar metabolism; N-acetylneuraminate degradation; D-fructose 6-phosphate from N-acetylneuraminate: step 3/5. Converts N-acetylmannosamine-6-phosphate (ManNAc-6-P) to N-acetylglucosamine-6-phosphate (GlcNAc-6-P). This Vibrio cholerae serotype O1 (strain ATCC 39315 / El Tor Inaba N16961) protein is Putative N-acetylmannosamine-6-phosphate 2-epimerase.